The following is a 147-amino-acid chain: Ribosome maturation factor RimP (147 aa).

This sequence belongs to the RimP family.

It localises to the cytoplasm. Its function is as follows. Required for maturation of 30S ribosomal subunits. This is Ribosome maturation factor RimP from Legionella pneumophila (strain Paris).